Consider the following 614-residue polypeptide: Maltose permease MAL31 (614 aa).

The disordered stretch occupies residues 1–48; the sequence is MKGLSSLINRKKDRNDSHLDEIENGVNATEFNSIEMEEQGKKSDFDLS. Residues 1 to 108 lie on the Cytoplasmic side of the membrane; that stretch reads MKGLSSLINR…AAAWSLLVST (108 aa). The span at 38 to 48 shows a compositional bias: basic and acidic residues; that stretch reads EQGKKSDFDLS. Residues 109 to 129 form a helical membrane-spanning segment; the sequence is TLIQEGYDTAILGAFYALPVF. Residues 130-144 lie on the Extracellular side of the membrane; sequence QKKYGSLNSNTGDYE. A helical transmembrane segment spans residues 145 to 165; sequence ISVSWQIGLCLCYMAGEIVGL. Topologically, residues 166–180 are cytoplasmic; sequence QMTGPSVDYMGNRYT. Residues 181-201 form a helical membrane-spanning segment; the sequence is LIMALFFLAAFIFILYFCKSL. Residue G202 is a topological domain, extracellular. The helical transmembrane segment at 203 to 223 threads the bilayer; it reads MIAVGQALCGMPWGCFQCLTV. Topologically, residues 224–236 are cytoplasmic; it reads SYASEICPLALRY. Residues 237–257 form a helical membrane-spanning segment; it reads YLTTYSNLCWAFGQLFAAGIM. The Extracellular portion of the chain corresponds to 258-272; the sequence is KNSQNKYANSELGYK. A helical transmembrane segment spans residues 273–293; it reads LPFALQWIWPLPLAVGIFFAP. Topologically, residues 294–364 are cytoplasmic; the sequence is ESPWWLVKKG…KDGINRRRTR (71 aa). A helical transmembrane segment spans residues 365 to 385; sequence IACLCWIGQCSCGASLIGYST. Residues 386 to 398 are Extracellular-facing; the sequence is YFYEKAGVSTDTA. A helical transmembrane segment spans residues 399–419; it reads FTFSIIQYCLGIAATFISWWA. Residues 420-427 lie on the Cytoplasmic side of the membrane; that stretch reads SKYCGRFD. A helical transmembrane segment spans residues 428 to 448; that stretch reads LYAFGLAFQAIMFFIIGGLGC. The Extracellular segment spans residues 449–460; sequence SDTHGAKMGSGA. The chain crosses the membrane as a helical span at residues 461 to 481; the sequence is LLMVVAFFYNLGIAPVVFCLV. The Cytoplasmic portion of the chain corresponds to 482–493; sequence SEIPSSRLRTKT. A helical transmembrane segment spans residues 494-514; sequence IILARNAYNVIQVVVTVLIMY. Topologically, residues 515–526 are extracellular; sequence QLNSEKWNWGAK. The helical transmembrane segment at 527 to 547 threads the bilayer; the sequence is SGFFWGGFCLATLAWAVVDLP. Residues 548–614 are Cytoplasmic-facing; the sequence is ETAGRTFIEI…GRNTSSVVNK (67 aa). The disordered stretch occupies residues 595 to 614; sequence EDLETSVVDEGRNTSSVVNK.

It belongs to the major facilitator superfamily. Sugar transporter (TC 2.A.1.1) family.

The protein resides in the membrane. In terms of biological role, high-affinity uptake of maltose and maltotriose. Also transports turanose but not alpha-methylglucoside, melezitose or trehalose. The polypeptide is Maltose permease MAL31 (MAL31) (Saccharomyces cerevisiae (strain ATCC 204508 / S288c) (Baker's yeast)).